Consider the following 911-residue polypeptide: Disks large homolog 1 (911 aa).

Residues 4–64 (RKQDTQRALH…FYEVTLLDNP (61 aa)) form the L27 domain. Serine 39 carries the phosphoserine; by CaMK2 modification. Positions 70 to 105 (SKQCEPVQPGNPWESGSLSSAAVTSESLPGGLSPPV) are disordered. Over residues 83–96 (ESGSLSSAAVTSES) the composition is skewed to polar residues. 3 positions are modified to phosphoserine: serine 122, serine 138, and serine 158. Positions 162–212 (PTEAVPPSSPIVPVTPALPVPAESPVVLPSTPQANPPPVLVNTDSLETPTY) are interaction with SH3 domains. PDZ domains are found at residues 224–310 (EITL…VKRR) and 318–404 (EIKL…AAKP). The segment at 224–545 (EITLERGNSG…QAVTIVAQYR (322 aa)) is required for interaction with MARCHF2. Serine 232 carries the post-translational modification Phosphoserine; by CaMK2. Tyrosine 398 bears the Phosphotyrosine mark. A compositionally biased stretch (polar residues) spans 419-441 (TNSSSQSVDNHVSPSSYLGQTPA). The disordered stretch occupies residues 419–443 (TNSSSQSVDNHVSPSSYLGQTPASP). The PDZ 3 domain occupies 465–545 (KVVLHRGSTG…QAVTIVAQYR (81 aa)). Phosphoserine is present on residues serine 567, serine 572, serine 574, serine 578, serine 597, serine 618, serine 684, serine 687, and serine 841. The 71-residue stretch at 580 to 650 (KRSLYVRALF…PSKRRVEKKE (71 aa)) folds into the SH3 domain. A disordered region spans residues 662 to 696 (KTRGDKGEIPDDMGSKGLKHVTSNASDSESSYHEY). Residues 721–896 (TRPVIILGPM…IYNQVKQIIE (176 aa)) enclose the Guanylate kinase-like domain.

This sequence belongs to the MAGUK family. In terms of assembly, homotetramer. Interacts (via guanylate kinase-like domain) with DLGAP1, DLGAP2, DLGAP3, DLGAP4 and MAP1A. Interacts (via guanylate kinase-like domain) with KIF13B. May interact with HTR2A. Interacts (via PDZ domains) with GRIA1. Interacts (via PDZ domains) with GRIN2A. Interacts (via PDZ domains) with KCND2 and KCND3. Interacts (via PDZ domains) with KCNA1, KCNA2, KCNA3 and KCNA4. Interacts (via PDZ domains) with ADGRA3. Interacts with KCNF1. Interacts with CAMK2. Interacts with cytoskeleton-associated protein EPB41. Interacts with cytoskeleton-associated protein EZR. Found in a complex with KCNA5 and CAV3. Found in a complex with APC and CTNNB1. Interacts (via PDZ domains) with APC. Interacts with CDH1 through binding to PIK3R1. Forms multiprotein complexes with CASK, LIN7A, LIN7B, LIN7C, APBA1, and KCNJ12. Interacts with TOPK. Forms a tripartite complex composed of DLG1, MPP7 and LIN7 (LIN7A or LIN7C). May interact with TJAP1. Interacts with PTEN. Interacts with FRMPD4 (via C-terminus). Interacts with LRFN1 and LRFN2. Interacts with LRFN4 and SFPQ. Interacts (via PDZ domains) with ADGRA2 (via PDZ-binding motif). Interacts with ADAM10; this interaction recruits ADAM10 to the cell membrane during long-term depression in hippocampal neurons. Interacts with DGKI (via PDZ-binding motif). Interacts (via PDZ domains) with MARCHF2 (via PDZ domain); the interaction leads to DLG1 ubiqtuitination and degradation. Interacts (via N-terminus) with MPP3; this interaction connects CADM1 with DLG1 and links CADM1 with the regulatory subunit of phosphoinositide-3-kinase (PI3K) by forming a multiprotein complex and participates in cell spreading. In terms of processing, phosphorylated by MAPK12. Phosphorylation of Ser-39 modulates transport to the plasma membrane. Phosphorylation of Ser-232 regulates association with GRIN2A. Post-translationally, ubiquitinated; by MARCHF2 which results in its degradation. Widely expressed. Strongly expressed in epithelial cells, in the small intestine it is only detected in the vili. Expressed in brain, heart (at protein level), muscle, lung and liver. In the brain it was detected in olfactory bulbs, cerebral cortex, hippocampus, and spinal cord (at protein level).

It is found in the cell membrane. Its subcellular location is the basolateral cell membrane. The protein resides in the endoplasmic reticulum membrane. The protein localises to the postsynaptic density. It localises to the synapse. It is found in the sarcolemma. Its subcellular location is the cell junction. The protein resides in the cytoplasm. The protein localises to the apical cell membrane. Functionally, essential multidomain scaffolding protein required for normal development. Recruits channels, receptors and signaling molecules to discrete plasma membrane domains in polarized cells. Promotes epithelial cell layer barrier function via maintaining cell-cell adhesion. May play a role in adherens junction assembly, signal transduction, cell proliferation, synaptogenesis and lymphocyte activation. Regulates the excitability of cardiac myocytes by modulating the functional expression of Kv4 channels. Functional regulator of Kv1.5 channel. During long-term depression in hippocampal neurons, it recruits ADAM10 to the plasma membrane. This chain is Disks large homolog 1, found in Rattus norvegicus (Rat).